The sequence spans 82 residues: Myosin light chain alkali (82 aa).

In terms of domain architecture, EF-hand spans 7 to 42 (GCYGDFIECLKLYDKEENGTMMLAELQHALLALGES).

Myosin is a hexamer of 2 heavy chains and 4 light chains.

The chain is Myosin light chain alkali (Mlc1) from Drosophila sechellia (Fruit fly).